The sequence spans 355 residues: Guanine nucleotide-binding protein G(i) subunit alpha-2 (355 aa).

The N-myristoyl glycine moiety is linked to residue Gly-2. Cys-3 carries the S-palmitoyl cysteine lipid modification. Residues 32 to 355 enclose the G-alpha domain; that stretch reads REVKLLLLGA…KNNLKDCGLF (324 aa). Residues 35-48 are G1 motif; sequence KLLLLGAGESGKST. Residues 40-47, 176-182, 201-205, 270-273, and Ala-327 each bind GTP; these read GAGESGKS, LRTRVKT, DVGGQ, and NKKD. The Mg(2+) site is built by Ser-47 and Thr-182. Residues 174–182 form a G2 motif region; that stretch reads DVLRTRVKT. Residues 197-206 form a G3 motif region; that stretch reads FKMFDVGGQR. The tract at residues 266–273 is G4 motif; sequence ILFLNKKD. The tract at residues 325 to 330 is G5 motif; sequence TCATDT.

The protein belongs to the G-alpha family. G(i/o/t/z) subfamily. G proteins are composed of 3 units; alpha, beta and gamma. The alpha chain contains the guanine nucleotide binding site.

It localises to the cytoplasm. It is found in the cytoskeleton. Its subcellular location is the microtubule organizing center. The protein resides in the centrosome. The protein localises to the cell membrane. Guanine nucleotide-binding proteins (G proteins) are involved as modulators or transducers in various transmembrane signaling systems. The G(i) proteins are involved in hormonal regulation of adenylate cyclase: they inhibit the cyclase in response to beta-adrenergic stimuli. May play a role in cell division. The chain is Guanine nucleotide-binding protein G(i) subunit alpha-2 (gnai2) from Oryzias latipes (Japanese rice fish).